The following is a 94-amino-acid chain: MARVTVEDAVNQIGNRFDMILVAARRARQIAVQGKDPMVEEENDKPTVIALREIELGLVTADTLDADERQTVREREAAEIAAVAAIAEGRNDIL.

The protein belongs to the RNA polymerase subunit omega family. As to quaternary structure, consists of a sigma factor and the RNAP core enzyme which is composed of 2 alpha chains, 1 beta chain, 1 beta' chain and 1 subunit omega.

It catalyses the reaction RNA(n) + a ribonucleoside 5'-triphosphate = RNA(n+1) + diphosphate. Promotes RNA polymerase assembly. Latches the N- and C-terminal regions of the beta' subunit thereby facilitating its interaction with the beta and alpha subunits. This Shewanella violacea (strain JCM 10179 / CIP 106290 / LMG 19151 / DSS12) protein is DNA-directed RNA polymerase subunit omega.